The sequence spans 213 residues: Kynurenine formamidase (213 aa).

Tryptophan 20 contributes to the substrate binding site. Residues histidine 50, histidine 54, and aspartate 56 each coordinate Zn(2+). Histidine 60 (proton donor/acceptor) is an active-site residue. Residues histidine 161 and glutamate 173 each contribute to the Zn(2+) site.

This sequence belongs to the Cyclase 1 superfamily. KynB family. Homodimer. Zn(2+) is required as a cofactor.

It carries out the reaction N-formyl-L-kynurenine + H2O = L-kynurenine + formate + H(+). The protein operates within amino-acid degradation; L-tryptophan degradation via kynurenine pathway; L-kynurenine from L-tryptophan: step 2/2. In terms of biological role, catalyzes the hydrolysis of N-formyl-L-kynurenine to L-kynurenine, the second step in the kynurenine pathway of tryptophan degradation. The polypeptide is Kynurenine formamidase (Pseudomonas paraeruginosa (strain DSM 24068 / PA7) (Pseudomonas aeruginosa (strain PA7))).